The following is a 509-amino-acid chain: tRNA-2-methylthio-N(6)-dimethylallyladenosine synthase (509 aa).

Residues 1 to 15 are compositionally biased toward polar residues; that stretch reads MNEQQRLASQQANSS. The tract at residues 1-25 is disordered; sequence MNEQQRLASQQANSSTKKEEKDYSK. The segment covering 16-25 has biased composition (basic and acidic residues); the sequence is TKKEEKDYSK. The region spanning 66 to 184 is the MTTase N-terminal domain; the sequence is RKFYIRTYGC…LPYILKDAMF (119 aa). Cys-75, Cys-111, Cys-145, Cys-221, Cys-225, and Cys-228 together coordinate [4Fe-4S] cluster. The 231-residue stretch at 207–437 folds into the Radical SAM core domain; it reads RRGDIKAWVN…NTLVNTLAIE (231 aa). The region spanning 440–503 is the TRAM domain; sequence SRYKGQIVEV…TWSLNGELVE (64 aa).

It belongs to the methylthiotransferase family. MiaB subfamily. In terms of assembly, monomer. The cofactor is [4Fe-4S] cluster.

The protein localises to the cytoplasm. The enzyme catalyses N(6)-dimethylallyladenosine(37) in tRNA + (sulfur carrier)-SH + AH2 + 2 S-adenosyl-L-methionine = 2-methylsulfanyl-N(6)-dimethylallyladenosine(37) in tRNA + (sulfur carrier)-H + 5'-deoxyadenosine + L-methionine + A + S-adenosyl-L-homocysteine + 2 H(+). In terms of biological role, catalyzes the methylthiolation of N6-(dimethylallyl)adenosine (i(6)A), leading to the formation of 2-methylthio-N6-(dimethylallyl)adenosine (ms(2)i(6)A) at position 37 in tRNAs that read codons beginning with uridine. The chain is tRNA-2-methylthio-N(6)-dimethylallyladenosine synthase from Bacillus cereus (strain B4264).